The chain runs to 332 residues: DNA double-strand break repair nuclease NurA (332 aa).

Aspartate 57 and aspartate 132 together coordinate Mn(2+).

This sequence belongs to the NurA family. Mn(2+) is required as a cofactor.

Involved in DNA double-strand break (DSB) repair. Probably acts with HerA to stimulate resection of the 5' strand and produce the long 3' single-strand that is required for RadA loading. Exhibits both single-stranded endonuclease activity and 5'-3' exonuclease activity on single-stranded and double-stranded DNA. The protein is DNA double-strand break repair nuclease NurA of Sulfolobus acidocaldarius (strain ATCC 33909 / DSM 639 / JCM 8929 / NBRC 15157 / NCIMB 11770).